We begin with the raw amino-acid sequence, 230 residues long: 5'-methylthioadenosine/S-adenosylhomocysteine nucleosidase (230 aa).

Glu12 serves as the catalytic Proton acceptor. Substrate is bound by residues Gly78, Met153, and 174 to 175 (ME). Catalysis depends on Asp198, which acts as the Proton donor.

It belongs to the PNP/UDP phosphorylase family. MtnN subfamily.

The enzyme catalyses S-adenosyl-L-homocysteine + H2O = S-(5-deoxy-D-ribos-5-yl)-L-homocysteine + adenine. It catalyses the reaction S-methyl-5'-thioadenosine + H2O = 5-(methylsulfanyl)-D-ribose + adenine. It carries out the reaction 5'-deoxyadenosine + H2O = 5-deoxy-D-ribose + adenine. Its pathway is amino-acid biosynthesis; L-methionine biosynthesis via salvage pathway; S-methyl-5-thio-alpha-D-ribose 1-phosphate from S-methyl-5'-thioadenosine (hydrolase route): step 1/2. Functionally, catalyzes the irreversible cleavage of the glycosidic bond in both 5'-methylthioadenosine (MTA) and S-adenosylhomocysteine (SAH/AdoHcy) to adenine and the corresponding thioribose, 5'-methylthioribose and S-ribosylhomocysteine, respectively. Also cleaves 5'-deoxyadenosine, a toxic by-product of radical S-adenosylmethionine (SAM) enzymes, into 5-deoxyribose and adenine. In Tolumonas auensis (strain DSM 9187 / NBRC 110442 / TA 4), this protein is 5'-methylthioadenosine/S-adenosylhomocysteine nucleosidase.